The chain runs to 194 residues: Amidophosphoribosyltransferase (194 aa).

A propeptide spanning residues 1–11 (MPHEPKGLNEE) is cleaved from the precursor. Cys-12 serves as the catalytic Nucleophile. The Glutamine amidotransferase type-2 domain maps to 12–194 (CGVFGVWGNP…PHGFRPMVVG (183 aa)).

The protein in the C-terminal section; belongs to the purine/pyrimidine phosphoribosyltransferase family.

The catalysed reaction is 5-phospho-beta-D-ribosylamine + L-glutamate + diphosphate = 5-phospho-alpha-D-ribose 1-diphosphate + L-glutamine + H2O. It participates in purine metabolism; IMP biosynthesis via de novo pathway; N(1)-(5-phospho-D-ribosyl)glycinamide from 5-phospho-alpha-D-ribose 1-diphosphate: step 1/2. Functionally, catalyzes the formation of phosphoribosylamine from phosphoribosylpyrophosphate (PRPP) and glutamine. The sequence is that of Amidophosphoribosyltransferase from Lacticaseibacillus casei (Lactobacillus casei).